A 201-amino-acid polypeptide reads, in one-letter code: Ciliary microtubule inner protein 2C (201 aa).

This sequence belongs to the CIMIP2 family. As to quaternary structure, microtubule inner protein component of sperm flagellar doublet microtubules.

The protein localises to the cytoplasm. The protein resides in the cytoskeleton. It localises to the cilium axoneme. It is found in the flagellum axoneme. In terms of biological role, microtubule inner protein (MIP) part of the dynein-decorated doublet microtubules (DMTs) in cilia axoneme, which is required for motile cilia beating. Binds to the intra-tubulin interfaces. The chain is Ciliary microtubule inner protein 2C (CIMIP2C) from Bos taurus (Bovine).